Here is a 124-residue protein sequence, read N- to C-terminus: Ribonuclease VapC32 (124 aa).

The PINc domain occupies 2–112; it reads ILVDTSVWIE…TRDKRLKAAC (111 aa). Mg(2+) is bound by residues D5 and D86.

The protein belongs to the PINc/VapC protein family. Requires Mg(2+) as cofactor.

In terms of biological role, toxic component of a type II toxin-antitoxin (TA) system. An RNase. Its toxic effect is neutralized by coexpression with cognate antitoxin VapB32. This Mycobacterium tuberculosis (strain CDC 1551 / Oshkosh) protein is Ribonuclease VapC32.